A 211-amino-acid polypeptide reads, in one-letter code: Large ribosomal subunit protein uL4 (211 aa).

The disordered stretch occupies residues 44 to 94 (RSGNHATKTRSEVRGGGKKPWSQKGTGHARQGSTRAPHWVGGGTVHGPQKR).

This sequence belongs to the universal ribosomal protein uL4 family. Part of the 50S ribosomal subunit.

Functionally, one of the primary rRNA binding proteins, this protein initially binds near the 5'-end of the 23S rRNA. It is important during the early stages of 50S assembly. It makes multiple contacts with different domains of the 23S rRNA in the assembled 50S subunit and ribosome. In terms of biological role, forms part of the polypeptide exit tunnel. The polypeptide is Large ribosomal subunit protein uL4 (Leptospira borgpetersenii serovar Hardjo-bovis (strain JB197)).